The chain runs to 193 residues: UPF0215 protein PH0071 (193 aa).

It belongs to the UPF0215 family.

The chain is UPF0215 protein PH0071 from Pyrococcus horikoshii (strain ATCC 700860 / DSM 12428 / JCM 9974 / NBRC 100139 / OT-3).